Here is an 82-residue protein sequence, read N- to C-terminus: ATP synthase subunit c, chloroplastic (82 aa).

The next 2 membrane-spanning stretches (helical) occupy residues proline 3–glycine 23 and phenylalanine 57–alanine 77.

Belongs to the ATPase C chain family. In terms of assembly, F-type ATPases have 2 components, F(1) - the catalytic core - and F(0) - the membrane proton channel. F(1) has five subunits: alpha(3), beta(3), gamma(1), delta(1), epsilon(1). F(0) has four main subunits: a(1), b(1), b'(1) and c(10-14). The alpha and beta chains form an alternating ring which encloses part of the gamma chain. F(1) is attached to F(0) by a central stalk formed by the gamma and epsilon chains, while a peripheral stalk is formed by the delta, b and b' chains.

It localises to the plastid. The protein resides in the chloroplast thylakoid membrane. In terms of biological role, f(1)F(0) ATP synthase produces ATP from ADP in the presence of a proton or sodium gradient. F-type ATPases consist of two structural domains, F(1) containing the extramembraneous catalytic core and F(0) containing the membrane proton channel, linked together by a central stalk and a peripheral stalk. During catalysis, ATP synthesis in the catalytic domain of F(1) is coupled via a rotary mechanism of the central stalk subunits to proton translocation. Its function is as follows. Key component of the F(0) channel; it plays a direct role in translocation across the membrane. A homomeric c-ring of between 10-14 subunits forms the central stalk rotor element with the F(1) delta and epsilon subunits. The sequence is that of ATP synthase subunit c, chloroplastic from Chlorella vulgaris (Green alga).